The chain runs to 87 residues: Large ribosomal subunit protein bL27 (87 aa).

This sequence belongs to the bacterial ribosomal protein bL27 family.

The chain is Large ribosomal subunit protein bL27 from Dechloromonas aromatica (strain RCB).